A 1634-amino-acid chain; its full sequence is Protein TIC 214 (1634 aa).

Helical transmembrane passes span 25–45 (FIIGQFIRFISIYYAPLYVAL), 53–73 (ILALPYLLIHLFWNTDKSFFA), 94–116 (HFILQLLNSCILPNSTLARLITI), 133–153 (FAWFIGQIFMLNSFELVLVWI), and 172–192 (IFVILFNCLFGSLLFILSIQC). Disordered stretches follow at residues 216 to 242 (RERLQSEEERDVEKKKPDYKLPDSESE) and 1365 to 1395 (QQKSETDSETDSQQKNIAETQKYLEEDSTKS). A compositionally biased stretch (basic and acidic residues) spans 1386-1395 (KYLEEDSTKS).

This sequence belongs to the TIC214 family. Part of the Tic complex.

Its subcellular location is the plastid. It localises to the chloroplast inner membrane. Functionally, involved in protein precursor import into chloroplasts. May be part of an intermediate translocation complex acting as a protein-conducting channel at the inner envelope. The polypeptide is Protein TIC 214 (Cuscuta exaltata (Tall dodder)).